A 368-amino-acid polypeptide reads, in one-letter code: WD repeat-containing protein RUP2 (368 aa).

7 WD repeats span residues 38 to 77 (SASDVIGAIEFDPTDNIVATAGISRKIRFYGLPSLLRNNA), 97 to 138 (CTPA…PVFE), 141 to 184 (EHGG…EESV), 192 to 232 (ICRS…DPAL), 236 to 276 (GHTK…RTYE), 279 to 318 (VNNRNFVGLSVWRNGALFGCGSENNRVFVYDRRWGKPVWV), and 330 to 368 (SDKRFVSSVCWRQSGVDQCTLVAGGSDGVLQVYVGKRKP).

Interacts with UVR8.

The protein resides in the nucleus. It is found in the cytoplasm. The protein localises to the cytosol. Functionally, functions in association with RUP1 as repressor of UV-B-induced photomorphogenesis mediated by UVR8 and HY5. Plays a crucial negative feedback regulatory role downstream of UVR8-COP1 to inhibit UVR8 function, balance UV-B-specific responses and ensure normal plant growth. Is involved in the regulation of photoperiodic flowering and vegetative development. May act as negative regulator of photoperiodic flowering by suppressing flowering through the action of CONSTANS (CO) and FLOWERING LOCUS T (FT). The protein is WD repeat-containing protein RUP2 (RUP2) of Arabidopsis thaliana (Mouse-ear cress).